A 1028-amino-acid polypeptide reads, in one-letter code: Contactin-6 (1028 aa).

The signal sequence occupies residues Met-1 to Gly-19. Ig-like C2-type domains lie at Pro-32 to Gln-117, Glu-122 to Gln-208, Pro-227 to Ala-308, Pro-318 to Arg-402, Pro-408 to Ile-495, and Arg-499 to Ser-587. Intrachain disulfides connect Cys-50–Cys-100, Cys-144–Cys-196, Cys-249–Cys-297, Cys-339–Cys-386, Cys-431–Cys-479, and Cys-521–Cys-577. Residues Asn-65 and Asn-193 are each glycosylated (N-linked (GlcNAc...) asparagine). N-linked (GlcNAc...) asparagine glycans are attached at residues Asn-368, Asn-377, and Asn-468. Fibronectin type-III domains follow at residues Pro-600–Ser-698, Ala-703–Asp-800, Ala-805–Ser-901, and Pro-902–Ser-996. N-linked (GlcNAc...) asparagine glycosylation is found at Asn-659, Asn-765, Asn-860, and Asn-865. Tyr-882 is subject to Phosphotyrosine. Positions Thr-887 to Pro-902 are enriched in polar residues. Residues Thr-887–Ala-908 are disordered. N-linked (GlcNAc...) asparagine glycans are attached at residues Asn-895, Asn-931, Asn-956, and Asn-957. Ser-999 carries GPI-anchor amidated serine lipidation. Positions Val-1000 to Arg-1028 are cleaved as a propeptide — removed in mature form.

Belongs to the immunoglobulin superfamily. Contactin family. Interacts with PTPRG. In terms of tissue distribution, specifically expressed in neuronal cells. In brain, it is expressed in spinal cord, cerebrum and cerebellum. At 17 dpc, it is expressed in hippocampus, cerebellum, and the brain stem. Strongly expressed after birth with a maximum level between P1 and P21, which corresponds to the time frame of oligodendrogliogenesis.

It is found in the cell membrane. Its function is as follows. Contactins mediate cell surface interactions during nervous system development. Participates in oligodendrocytes generation by acting as a ligand of NOTCH1. Its association with NOTCH1 promotes NOTCH1 activation through the released notch intracellular domain (NICD) and subsequent translocation to the nucleus. May be involved in motor coordination. The sequence is that of Contactin-6 (Cntn6) from Rattus norvegicus (Rat).